Reading from the N-terminus, the 184-residue chain is ATP synthase subunit b, chloroplastic (184 aa).

A helical membrane pass occupies residues 27–49; the sequence is LATNPINLSVVLGVLIFFGKGVL.

This sequence belongs to the ATPase B chain family. As to quaternary structure, F-type ATPases have 2 components, F(1) - the catalytic core - and F(0) - the membrane proton channel. F(1) has five subunits: alpha(3), beta(3), gamma(1), delta(1), epsilon(1). F(0) has four main subunits: a(1), b(1), b'(1) and c(10-14). The alpha and beta chains form an alternating ring which encloses part of the gamma chain. F(1) is attached to F(0) by a central stalk formed by the gamma and epsilon chains, while a peripheral stalk is formed by the delta, b and b' chains.

Its subcellular location is the plastid. It localises to the chloroplast thylakoid membrane. Functionally, f(1)F(0) ATP synthase produces ATP from ADP in the presence of a proton or sodium gradient. F-type ATPases consist of two structural domains, F(1) containing the extramembraneous catalytic core and F(0) containing the membrane proton channel, linked together by a central stalk and a peripheral stalk. During catalysis, ATP synthesis in the catalytic domain of F(1) is coupled via a rotary mechanism of the central stalk subunits to proton translocation. In terms of biological role, component of the F(0) channel, it forms part of the peripheral stalk, linking F(1) to F(0). This is ATP synthase subunit b, chloroplastic from Carica papaya (Papaya).